Reading from the N-terminus, the 556-residue chain is Large cysteine-rich periplasmic protein OmcB (556 aa).

The N-terminal stretch at 1–22 is a signal peptide; the sequence is MSKLIRRVVTVLALTSMASCFA. A propeptide spanning residues 23–40 is cleaved from the precursor; it reads SGGIEAAVAESLITKIVA.

Part of a disulfide cross-linked outer membrane complex (COMC) composed of the major outer membrane porin (MOMP), the small cysteine-rich protein (OmcA) and the large cysteine-rich periplasmic protein (OmcB).

The protein resides in the periplasm. Its function is as follows. In elementary bodies (EBs, the infectious stage, which is able to survive outside the host cell) provides the structural integrity of the outer envelope through disulfide cross-links with the small cysteine-rich protein and the major outer membrane porin. It has been described in publications as the Sarkosyl-insoluble COMC (Chlamydia outer membrane complex), and serves as the functional equivalent of peptidoglycan. This Chlamydia pneumoniae (Chlamydophila pneumoniae) protein is Large cysteine-rich periplasmic protein OmcB (omcB).